Consider the following 314-residue polypeptide: tRNA dimethylallyltransferase (314 aa).

12–19 (GPTAAGKS) is an ATP binding site. Residue 14–19 (TAAGKS) participates in substrate binding. Interaction with substrate tRNA regions lie at residues 37–40 (DSAT), 161–165 (QRIQR), and 245–250 (RCVGYR).

The protein belongs to the IPP transferase family. Monomer. It depends on Mg(2+) as a cofactor.

It carries out the reaction adenosine(37) in tRNA + dimethylallyl diphosphate = N(6)-dimethylallyladenosine(37) in tRNA + diphosphate. In terms of biological role, catalyzes the transfer of a dimethylallyl group onto the adenine at position 37 in tRNAs that read codons beginning with uridine, leading to the formation of N6-(dimethylallyl)adenosine (i(6)A). The protein is tRNA dimethylallyltransferase of Bordetella petrii (strain ATCC BAA-461 / DSM 12804 / CCUG 43448).